The chain runs to 405 residues: Acetate kinase (405 aa).

A Mg(2+)-binding site is contributed by N7. Residue K14 coordinates ATP. R99 contributes to the substrate binding site. D156 serves as the catalytic Proton donor/acceptor. 215-219 (HLGNG) serves as a coordination point for ATP. A Mg(2+)-binding site is contributed by E391.

It belongs to the acetokinase family. Homodimer. Mg(2+) serves as cofactor. The cofactor is Mn(2+).

It is found in the cytoplasm. It carries out the reaction acetate + ATP = acetyl phosphate + ADP. Its pathway is metabolic intermediate biosynthesis; acetyl-CoA biosynthesis; acetyl-CoA from acetate: step 1/2. Functionally, catalyzes the formation of acetyl phosphate from acetate and ATP. Can also catalyze the reverse reaction. In Nostoc sp. (strain PCC 7120 / SAG 25.82 / UTEX 2576), this protein is Acetate kinase.